The following is a 69-amino-acid chain: Cold shock-like protein CspE (69 aa).

Residues 6–66 (GNVKWFNESK…GAKGPSAANV (61 aa)) enclose the CSD domain.

Its subcellular location is the cytoplasm. The protein is Cold shock-like protein CspE (cspE) of Escherichia coli O6:H1 (strain CFT073 / ATCC 700928 / UPEC).